The sequence spans 699 residues: Polyribonucleotide nucleotidyltransferase (699 aa).

Mg(2+)-binding residues include Asp485 and Asp491. A KH domain is found at 552 to 611 (PRITTIKINPEKIRDVIGKGGAVIRALTEETGTTIELEDDGTVRIASSNGEATKEAIRRI). An S1 motif domain is found at 621-689 (GRIYNGKVIR…RQGRVRLSIK (69 aa)).

Belongs to the polyribonucleotide nucleotidyltransferase family. Component of the RNA degradosome, which is a multiprotein complex involved in RNA processing and mRNA degradation. The cofactor is Mg(2+).

The protein resides in the cytoplasm. The enzyme catalyses RNA(n+1) + phosphate = RNA(n) + a ribonucleoside 5'-diphosphate. In terms of biological role, involved in mRNA degradation. Catalyzes the phosphorolysis of single-stranded polyribonucleotides processively in the 3'- to 5'-direction. The protein is Polyribonucleotide nucleotidyltransferase of Shewanella sp. (strain W3-18-1).